The chain runs to 474 residues: Glutamate--tRNA ligase (474 aa).

The short motif at 11–21 (PSPTGFLHIGG) is the 'HIGH' region element. Residues 240–244 (KLSKR) carry the 'KMSKS' region motif. Lys-243 lines the ATP pocket.

The protein belongs to the class-I aminoacyl-tRNA synthetase family. Glutamate--tRNA ligase type 1 subfamily. In terms of assembly, monomer.

It localises to the cytoplasm. It carries out the reaction tRNA(Glu) + L-glutamate + ATP = L-glutamyl-tRNA(Glu) + AMP + diphosphate. Its function is as follows. Catalyzes the attachment of glutamate to tRNA(Glu) in a two-step reaction: glutamate is first activated by ATP to form Glu-AMP and then transferred to the acceptor end of tRNA(Glu). The sequence is that of Glutamate--tRNA ligase from Nitrobacter winogradskyi (strain ATCC 25391 / DSM 10237 / CIP 104748 / NCIMB 11846 / Nb-255).